A 564-amino-acid chain; its full sequence is MKQEPQQQQPAQQPPPAGAGVPAFLSKLWALVGEAPSNQLITWSQNGQSFLVLDEQRFAKEILPKYFKHNNMASFVRQLNMYGFRKVVHVDSGIVKLERDGLVEFQHPYFKQGREDLLEHIKRKVSSSRPEENKISQEDLSKIISSAQKVEIKQETIESRLSALKRENESLWREVAELRAKHLKQQQVIRKIVQFIVTLVQNNQLVSLKRKRPLLLNTNGPTKSNVFQQIVKEPADNNNHVPLNRTEGLKQREQISDDIIIYDVTEDVADEENTMVDEENAPITPETNEDTTSDSSNCSRSPDIVIVEDDNEEEYAPVIQGDKSTESVAVSANDPLSPVSDSTSPLMSSAVQLNNQSTLTAEDPVSMMDSILNENGVISQNINLLGKVELLDYLDSIDCSLEDFQAMLSGRQFSIDPDLLFDLFTSSVQMNPTDHIPNTKMETKGIETTKSNAGPAASQETQVSKPKSDKQLIQYTAFPLLAFLDGNPGSTVESGSSATETPSSVDKPLEVDELLESSLDPEPTQSKLVRLEPLTEAEASEATLFYLCELAPAPMDTDMPFLDN.

The DNA-binding element occupies 21–126 (VPAFLSKLWA…LLEHIKRKVS (106 aa)). The hydrophobic repeat HR-A/B stretch occupies residues 133-206 (NKISQEDLSK…VTLVQNNQLV (74 aa)). Positions 271–280 (EENTMVDEEN) are enriched in acidic residues. Disordered stretches follow at residues 271 to 301 (EENT…CSRS) and 320 to 347 (QGDK…SPLM). The segment at 390–415 (LLDYLDSIDCSLEDFQAMLSGRQFSI) is hydrophobic repeat HR-C. Positions 448–465 (TTKSNAGPAASQETQVSK) are enriched in polar residues. The interval 448 to 468 (TTKSNAGPAASQETQVSKPKS) is disordered.

The protein belongs to the HSF family. In terms of assembly, homotrimer. As to expression, expressed in most tissues with the exceptions of blood and liver.

The protein localises to the cytoplasm. It is found in the nucleus. Its function is as follows. DNA-binding protein that specifically binds heat shock promoter elements (HSE) and activates transcription. HSF2 shows constitutive DNA binding activity, even without heat shock. The chain is Heat shock factor protein 2 (HSF2) from Gallus gallus (Chicken).